Here is a 671-residue protein sequence, read N- to C-terminus: MEPIEQQLTELRTTLRHHEYLYHVMDAPEIPDAEYDRLMRELRELEAQRPDLITPDSPTQRVGAAPLTAFNQIRHEVPMLSLDNVFDEESFLAFNKRVQDRLKSTENVIWCCELKLDGLAVSILYENGVLVSAATRGDGTTGEDITSNVRTIRAIPLKLHGDNIPARLEVRGEVFLPQAGFEKINEDARRTGGKVFANPRNAAAGSLRQLDPRITAKRPLTFFCYGVGILEGGELPDTHLGRLLQFKAWGLPVSDRVTLCDSPQAVLDFYHNVEKDRPTLGFDIDGVVIKVNSLALQELLGFVARAPRWAVAFKFPAQEQMTFVRDVEFQVGRTGAITPVARLEPVQVAGVLVSNATLHNADEIERLGLRIGDKVVIRRAGDVIPQVVNVVLSERPEETRPIVFPTHCPVCGSDVERVEGEAVTRCTGGLICGAQRKESLKHFVSRRAMDVDGMGDKIIDQLVEREYVHTPADLFRLTAGKLTGLDRMGPKSAQNVVNALEKSKTTTFARFLYALGIREVGEATAAGLAAYFGTLEALQAATIDELQKVPDVGIVVATHVFNFFAEESNRDVIGQLLAEGVHWPAPVVINVQEIDSPFAGKTVVLTGSLSQMSRDDAKARLVALGAKVAGSVSKKTDLVIAGEAAGSKLAKAQELGITVIDEAEMIRLLGA.

NAD(+) contacts are provided by residues 32-36, 81-82, and Glu-113; these read DAEYD and SL. Lys-115 functions as the N6-AMP-lysine intermediate in the catalytic mechanism. The NAD(+) site is built by Arg-136, Glu-173, Lys-290, and Lys-314. Cys-408, Cys-411, Cys-426, and Cys-432 together coordinate Zn(2+). Positions 593–671 constitute a BRCT domain; the sequence is EIDSPFAGKT…EAEMIRLLGA (79 aa).

Belongs to the NAD-dependent DNA ligase family. LigA subfamily. Mg(2+) serves as cofactor. It depends on Mn(2+) as a cofactor.

It catalyses the reaction NAD(+) + (deoxyribonucleotide)n-3'-hydroxyl + 5'-phospho-(deoxyribonucleotide)m = (deoxyribonucleotide)n+m + AMP + beta-nicotinamide D-nucleotide.. Functionally, DNA ligase that catalyzes the formation of phosphodiester linkages between 5'-phosphoryl and 3'-hydroxyl groups in double-stranded DNA using NAD as a coenzyme and as the energy source for the reaction. It is essential for DNA replication and repair of damaged DNA. This chain is DNA ligase, found in Salmonella typhimurium (strain LT2 / SGSC1412 / ATCC 700720).